The chain runs to 174 residues: Co-chaperone protein HscB (174 aa).

Residues 2-74 enclose the J domain; the sequence is DYFTLFGLPA…LKRAEYMLSL (73 aa).

It belongs to the HscB family. In terms of assembly, interacts with HscA and stimulates its ATPase activity. Interacts with IscU.

Its function is as follows. Co-chaperone involved in the maturation of iron-sulfur cluster-containing proteins. Seems to help targeting proteins to be folded toward HscA. The polypeptide is Co-chaperone protein HscB (Yersinia pseudotuberculosis serotype O:1b (strain IP 31758)).